Reading from the N-terminus, the 258-residue chain is MMNPLIIKLGGVLLDSEEALERLFTALVNYRESHQRPLVIVHGGGCVVDELMKGLNLPVKKKDGLRVTPADQIGIITGALAGTANKTLLAWAKKHHIASVGLFLGDGDSVNVTQLDEALGHVGLAQPGSPKLINMLLENGFLPVVSSIGVTDDGQLMNVNADQAATALAATLGADLILLSDVSGILDGKGQRIAEMTASKAEQLIDQGIITDGMIVKVNAALDAARALGRPVDIASWRHAEQLPALFNGTPIGTRILA.

Residues 44–45 (GG), Arg66, and Asn158 each bind substrate. ATP contacts are provided by residues 181–186 (DVSGIL) and 209–211 (IIT).

Belongs to the acetylglutamate kinase family. ArgB subfamily. As to quaternary structure, homodimer.

The protein localises to the cytoplasm. The enzyme catalyses N-acetyl-L-glutamate + ATP = N-acetyl-L-glutamyl 5-phosphate + ADP. The protein operates within amino-acid biosynthesis; L-arginine biosynthesis; N(2)-acetyl-L-ornithine from L-glutamate: step 2/4. Its function is as follows. Catalyzes the ATP-dependent phosphorylation of N-acetyl-L-glutamate. The chain is Acetylglutamate kinase from Salmonella paratyphi A (strain ATCC 9150 / SARB42).